The following is a 123-amino-acid chain: Large ribosomal subunit protein uL14 (123 aa).

This sequence belongs to the universal ribosomal protein uL14 family. In terms of assembly, part of the 50S ribosomal subunit. Forms a cluster with proteins L3 and L19. In the 70S ribosome, L14 and L19 interact and together make contacts with the 16S rRNA in bridges B5 and B8.

Binds to 23S rRNA. Forms part of two intersubunit bridges in the 70S ribosome. In Yersinia pestis bv. Antiqua (strain Antiqua), this protein is Large ribosomal subunit protein uL14.